The primary structure comprises 30 residues: Photosystem I reaction center subunit XII (30 aa).

Residues 7 to 26 (IFVALLFALVSAVLAIRLGT) traverse the membrane as a helical segment.

It belongs to the PsaM family.

Its subcellular location is the plastid. The protein localises to the chloroplast thylakoid membrane. The chain is Photosystem I reaction center subunit XII from Gracilaria tenuistipitata var. liui (Red alga).